A 24-amino-acid polypeptide reads, in one-letter code: Cytochrome c oxidase subunit 5A-2, mitochondrial (24 aa).

This sequence belongs to the cytochrome c oxidase subunit 5A family. As to quaternary structure, component of the cytochrome c oxidase (complex IV, CIV), a multisubunit enzyme composed of 14 subunits. The complex is composed of a catalytic core of 3 subunits MT-CO1, MT-CO2 and MT-CO3, encoded in the mitochondrial DNA, and 11 supernumerary subunits COX4I, COX5A, COX5B, COX6A, COX6B, COX6C, COX7A, COX7B, COX7C, COX8 and NDUFA4, which are encoded in the nuclear genome. The complex exists as a monomer or a dimer and forms supercomplexes (SCs) in the inner mitochondrial membrane with NADH-ubiquinone oxidoreductase (complex I, CI) and ubiquinol-cytochrome c oxidoreductase (cytochrome b-c1 complex, complex III, CIII), resulting in different assemblies (supercomplex SCI(1)III(2)IV(1) and megacomplex MCI(2)III(2)IV(2)).

The protein localises to the mitochondrion inner membrane. Its pathway is energy metabolism; oxidative phosphorylation. In terms of biological role, component of the cytochrome c oxidase, the last enzyme in the mitochondrial electron transport chain which drives oxidative phosphorylation. The respiratory chain contains 3 multisubunit complexes succinate dehydrogenase (complex II, CII), ubiquinol-cytochrome c oxidoreductase (cytochrome b-c1 complex, complex III, CIII) and cytochrome c oxidase (complex IV, CIV), that cooperate to transfer electrons derived from NADH and succinate to molecular oxygen, creating an electrochemical gradient over the inner membrane that drives transmembrane transport and the ATP synthase. Cytochrome c oxidase is the component of the respiratory chain that catalyzes the reduction of oxygen to water. Electrons originating from reduced cytochrome c in the intermembrane space (IMS) are transferred via the dinuclear copper A center (CU(A)) of subunit 2 and heme A of subunit 1 to the active site in subunit 1, a binuclear center (BNC) formed by heme A3 and copper B (CU(B)). The BNC reduces molecular oxygen to 2 water molecules using 4 electrons from cytochrome c in the IMS and 4 protons from the mitochondrial matrix. This is Cytochrome c oxidase subunit 5A-2, mitochondrial from Thunnus obesus (Bigeye tuna).